The chain runs to 587 residues: L-ornithine N(5)-monooxygenase (587 aa).

Residues 53-61 (EKHTSFQWH) and Gln-72 contribute to the FAD site. Substrate is bound at residue Lys-77. 235–238 (GGQS) serves as a coordination point for NADP(+). Substrate-binding positions include 282–285 (NEVF) and Asn-312. An NADP(+)-binding site is contributed by 312 to 314 (NYS). A disordered region spans residues 488-511 (DNSAASGVSGASTPLTSPSEEEGK). Polar residues predominate over residues 491–505 (AASGVSGASTPLTSP). 567-569 (TLL) contributes to the FAD binding site. A substrate-binding site is contributed by Ser-570.

The protein belongs to the lysine N(6)-hydroxylase/L-ornithine N(5)-oxygenase family. Homotetramer. FAD is required as a cofactor.

The catalysed reaction is L-ornithine + NADPH + O2 = N(5)-hydroxy-L-ornithine + NADP(+) + H2O. It carries out the reaction L-ornithine + NADH + O2 = N(5)-hydroxy-L-ornithine + NAD(+) + H2O. It functions in the pathway siderophore biosynthesis; ferrichrome biosynthesis. Its function is as follows. L-ornithine N(5)-monooxygenase; part of the siderophore biosynthetic pathway. Omphalotus olearius produces ferrichrome A, but no other siderophore has been detected. Ferrichrome A consists of a hexapeptide ring made up of one glycine, two serine, and three N(5)-hydroxyornithine amino acid residues, the latter acylated by trans-(alpha-methyl)-glutaconic acid residues. The biosynthesis of ferrichrome A depends on the hydroxylation of ornithine to N(5)-hydroxyornithine, catalyzed by the monooxygenase omo1. The second step, the acylation of N(5)-hydroxy-L-ornithine is probably catalyzed by the N-acyltransferase ato1. Finally, assembly of ferrichrome A is catalyzed by the nonribosomal peptide synthase (NRPS) fso1. The sequence is that of L-ornithine N(5)-monooxygenase from Omphalotus olearius (Jack o'lantern).